A 261-amino-acid polypeptide reads, in one-letter code: Kallikrein-1 (261 aa).

The first 18 residues, 1 to 18 (MWFLILFLALSLGRNDAA), serve as a signal peptide directing secretion. Residues 19-24 (PPVQSR) constitute a propeptide, activation peptide. One can recognise a Peptidase S1 domain in the interval 25–258 (VVGGYNCEMN…FTPWIKEVMK (234 aa)). 5 disulfides stabilise this stretch: Cys31–Cys173, Cys50–Cys66, Cys152–Cys219, Cys184–Cys198, and Cys209–Cys234. The Charge relay system role is filled by His65. Residue Asn108 is glycosylated (N-linked (GlcNAc...) asparagine). Residue Asp120 is the Charge relay system of the active site. Catalysis depends on Ser213, which acts as the Charge relay system.

This sequence belongs to the peptidase S1 family. Kallikrein subfamily. In terms of tissue distribution, high levels in pancreas, submaxillary and parotid glands, spleen, and kidney.

It carries out the reaction Preferential cleavage of Arg-|-Xaa bonds in small molecule substrates. Highly selective action to release kallidin (lysyl-bradykinin) from kininogen involves hydrolysis of Met-|-Xaa or Leu-|-Xaa.. The sequence is that of Kallikrein-1 (Ngfg) from Rattus norvegicus (Rat).